We begin with the raw amino-acid sequence, 202 residues long: D-alanyl-D-alanine dipeptidase (202 aa).

The Zn(2+) site is built by His-116 and Asp-123. Residue Glu-181 is the Proton donor/acceptor of the active site. His-184 is a binding site for Zn(2+).

Belongs to the peptidase M15D family. The cofactor is Zn(2+).

The enzyme catalyses D-alanyl-D-alanine + H2O = 2 D-alanine. Functionally, catalyzes hydrolysis of the D-alanyl-D-alanine dipeptide. The protein is D-alanyl-D-alanine dipeptidase (vanXB) of Enterococcus faecalis (strain ATCC 700802 / V583).